We begin with the raw amino-acid sequence, 227 residues long: MMLHLQGVLSKQQVAQCREVLDAAQWIDGNVTSGEQSAQAKRNQQLPEGSAAARAVGDAIQDALGRNPRFFSAALPLKVFPPLFNRYAGGDGFATHVDNAIRQLRGTDFRIRSDLSATLFLAEPDTYEGGELCIEDTYGVHRARLPAGDMVLYPASSLHHVSPVTRGVRVASFFWIQSMVRDDGERATLFQLDNDVQRLAAEKGSNDATVVSLTGIYHNLLRRWADA.

One can recognise a Fe2OG dioxygenase domain in the interval 78 to 178 (KVFPPLFNRY…RVASFFWIQS (101 aa)). 3 residues coordinate Fe cation: H96, D98, and H159. Residue R169 coordinates 2-oxoglutarate.

The cofactor is Fe(2+). It depends on L-ascorbate as a cofactor.

The sequence is that of PKHD-type hydroxylase Bxeno_B2194 from Paraburkholderia xenovorans (strain LB400).